The chain runs to 534 residues: Cytochrome c oxidase subunit 1 (534 aa).

At 1-14 (MVQRWLYSTNAKDI) the chain is on the mitochondrial matrix side. The helical transmembrane segment at 15 to 39 (AVLYFMLAIFSGMAGTAMSLIIRLE) threads the bilayer. The Ca(2+) site is built by glutamate 39, alanine 42, and glycine 44. At 40–54 (LAAPGSQYLHGNSQL) the chain is on the mitochondrial intermembrane side. Residues 55-88 (FNVLVVGHAVLMIFFLVMPALIGGFGNYLLPLMI) traverse the membrane as a helical segment. Histidine 62 is a Fe(II)-heme a binding site. The Mitochondrial matrix portion of the chain corresponds to 89–97 (GATDTAFPR). Residues 98-118 (INNIAFWVLPMGLVCLVTSTL) traverse the membrane as a helical segment. Residues 119–142 (VESGAGTGWTVYPPLSSIQAHSGP) are Mitochondrial intermembrane-facing. The helical transmembrane segment at 143–171 (SVDLAIFALHLTSISSLLGAINFIVTTLN) threads the bilayer. The Mitochondrial matrix portion of the chain corresponds to 172–183 (MRTNGMTMHKLP). Residues 184-215 (LFVWSIFITAFLLLLSLPVLSAGITMLLLDRN) traverse the membrane as a helical segment. The Mitochondrial intermembrane portion of the chain corresponds to 216 to 228 (FNTSFFEVSGGGD). A helical transmembrane segment spans residues 229 to 263 (PILYEHLFWFFGHPEVYILIIPGFGIISHVVSTYS). Residue histidine 241 participates in Cu cation binding. A cross-link (1'-histidyl-3'-tyrosine (His-Tyr)) is located at residues 241 to 245 (HPEVY). Position 245 (tyrosine 245) interacts with O2. Residues 264-269 (KKPVFG) are Mitochondrial matrix-facing. The helical transmembrane segment at 270-295 (EISMVYAMASIGLLGFLVWSHHMYIV) threads the bilayer. 2 residues coordinate Cu cation: histidine 290 and histidine 291. Residues 296–298 (GLD) are Mitochondrial intermembrane-facing. The chain crosses the membrane as a helical span at residues 299–327 (ADTRAYFTSATMIIAIPTGIKIFSWLATI). At 328-335 (HGGSIRLA) the chain is on the mitochondrial matrix side. The chain crosses the membrane as a helical span at residues 336 to 358 (TPMLYAIAFLFLFTMGGLTGVAL). Residues 359–370 (ANASLDVAFHDT) are Mitochondrial intermembrane-facing. The Mg(2+) site is built by histidine 368 and aspartate 369. A helical transmembrane segment spans residues 371–400 (YYVVGHFHYVLSMGAIFSLFAGYYYWSPQI). Position 376 (histidine 376) interacts with heme a3. Residue histidine 378 participates in Fe(II)-heme a binding. At 401–406 (LGLNYN) the chain is on the mitochondrial matrix side. The chain crosses the membrane as a helical span at residues 407-431 (EKLAQIQFWLIFIGANVIFFPMHFL). Topologically, residues 432 to 449 (GINGMPRRIPDYPDAFAG) are mitochondrial intermembrane. Proline 441 serves as a coordination point for Ca(2+). A helical membrane pass occupies residues 450–474 (WNYVASIGSFIATLSLFLFIYILYD). Topologically, residues 475–534 (QLVNGLNNKVNNKSVIYNKAPDFVESNTIFNLNTVKSSSIEFLLTSPPAVHSFNTPAVQS) are mitochondrial matrix.

Belongs to the heme-copper respiratory oxidase family. In terms of assembly, component of the cytochrome c oxidase (complex IV, CIV), a multisubunit enzyme composed of 12 subunits. The complex is composed of a catalytic core of 3 subunits COX1, COX2 and COX3, encoded in the mitochondrial DNA, and 9 supernumerary subunits COX4, COX5A (or COX5B), COX6, COX7, COX8, COX9, COX12, COX13 and COX26, which are encoded in the nuclear genome. The complex exists as a monomer or a dimer and forms supercomplexes (SCs) in the inner mitochondrial membrane with a dimer of ubiquinol-cytochrome c oxidoreductase (cytochrome b-c1 complex, complex III, CIII), resulting in 2 different assemblies (supercomplexes III(2)IV and III(2)IV(2)). Requires heme as cofactor. The cofactor is Cu cation. Post-translationally, the N-terminus is blocked.

It is found in the mitochondrion inner membrane. The catalysed reaction is 4 Fe(II)-[cytochrome c] + O2 + 8 H(+)(in) = 4 Fe(III)-[cytochrome c] + 2 H2O + 4 H(+)(out). It participates in energy metabolism; oxidative phosphorylation. Its function is as follows. Component of the cytochrome c oxidase, the last enzyme in the mitochondrial electron transport chain which drives oxidative phosphorylation. The respiratory chain contains 3 multisubunit complexes succinate dehydrogenase (complex II, CII), ubiquinol-cytochrome c oxidoreductase (cytochrome b-c1 complex, complex III, CIII) and cytochrome c oxidase (complex IV, CIV), that cooperate to transfer electrons derived from NADH and succinate to molecular oxygen, creating an electrochemical gradient over the inner membrane that drives transmembrane transport and the ATP synthase. Cytochrome c oxidase is the component of the respiratory chain that catalyzes the reduction of oxygen to water. Electrons originating from reduced cytochrome c in the intermembrane space (IMS) are transferred via the dinuclear copper A center (CU(A)) of COX2 and heme A of COX1 to the active site in COX1, a binuclear center (BNC) formed by heme A3 and copper B (CU(B)). The BNC reduces molecular oxygen to 2 water molecules using 4 electrons from cytochrome c in the IMS and 4 protons from the mitochondrial matrix. COX1 is a catalytic core subunit containing heme A and the active site BNC with heme A3 and the copper atom CU(B). This is Cytochrome c oxidase subunit 1 (COX1) from Saccharomyces cerevisiae (strain ATCC 204508 / S288c) (Baker's yeast).